The primary structure comprises 157 residues: uncharacterized protein (157 aa).

Residues 1 to 17 (MSMKTKAAFHLVLFGLA) form the signal peptide. C18 is lipidated: N-palmitoyl cysteine. C18 carries the S-diacylglycerol cysteine lipid modification. 3 helical membrane passes run 42 to 64 (MVFDLNLTPFILFVAASAVYLYL), 98 to 120 (ASYIAVYFSLPAAAVLLIFYPLF), and 124 to 146 (IPFFPIIIVFIIMIIQHLSYVIS).

It localises to the cell membrane. This is an uncharacterized protein from Bacillus subtilis (strain 168).